A 463-amino-acid polypeptide reads, in one-letter code: L-seryl-tRNA(Sec) selenium transferase (463 aa).

Lysine 295 carries the N6-(pyridoxal phosphate)lysine modification.

Belongs to the SelA family. Homodecamer; pentamer of dimers. Binds only one seryl-tRNA(Sec) per dimer. Pyridoxal 5'-phosphate is required as a cofactor.

It is found in the cytoplasm. The catalysed reaction is L-seryl-tRNA(Sec) + selenophosphate + H(+) = L-selenocysteinyl-tRNA(Sec) + phosphate. It participates in aminoacyl-tRNA biosynthesis; selenocysteinyl-tRNA(Sec) biosynthesis; selenocysteinyl-tRNA(Sec) from L-seryl-tRNA(Sec) (bacterial route): step 1/1. Its function is as follows. Converts seryl-tRNA(Sec) to selenocysteinyl-tRNA(Sec) required for selenoprotein biosynthesis. The protein is L-seryl-tRNA(Sec) selenium transferase of Salmonella schwarzengrund (strain CVM19633).